A 596-amino-acid chain; its full sequence is Heat shock factor protein 5 (596 aa).

A DNA-binding region spans residues 10–200 (NPNNFPAKLW…FHRSFRRDSL (191 aa)). The interval 541-576 (EMGPASKPSEDTGLATPARYREHRSNSQQGKSPDLH) is disordered. Ser-572 bears the Phosphoserine mark.

It belongs to the HSF family. As to quaternary structure, homooligomer.

The protein resides in the nucleus. The protein localises to the chromosome. Its function is as follows. DNA-binding transcription factor that is essential for male fertility, spermatogenesis and meiotic prophase progression in spermatocytes under non-stress conditions. Positvely and negatively regulates gene expression to ensure progression of meiotic prophase beyond pachytene stage in spermatocytes. Plays a role in male germline meiotic sex chromosome remodeling and silencing through regulation of SMARCA4. The polypeptide is Heat shock factor protein 5 (HSF5) (Homo sapiens (Human)).